Reading from the N-terminus, the 923-residue chain is Neuropilin-1 (923 aa).

The N-terminal stretch at 1–21 is a signal peptide; the sequence is MERGLPLLCATLALALALAGA. Topologically, residues 22-856 are extracellular; it reads FRSDKCGGTI…PGNVLKTLDP (835 aa). 3 disulfide bridges follow: C27–C54, C82–C104, and C147–C173. CUB domains lie at 27–141 and 147–265; these read CGGT…YEIF and CSQN…YSVL. An N-linked (GlcNAc...) asparagine glycan is attached at N150. Residues E195, D209, and D250 each contribute to the Ca(2+) site. An intrachain disulfide couples C206 to C228. Residues N261, N300, and N522 are each glycosylated (N-linked (GlcNAc...) asparagine). Cystine bridges form between C275-C424 and C431-C583. F5/8 type C domains are found at residues 275–424 and 431–583; these read CMEA…VYGC and CSGM…LLGC. O-linked (Xyl...) (chondroitin sulfate) serine; alternate glycosylation occurs at S612. O-linked (Xyl...) (heparan sulfate) serine; alternate glycosylation occurs at S612. The MAM domain maps to 645 to 811; the sequence is TYGFNCEFGW…NHISQEDCAK (167 aa). The interval 820–845 is disordered; that stretch reads TEIKIDETGSTPGYEGEGEGDKNISR. O-linked (Xyl...) (chondroitin sulfate) serine glycosylation is present at S829. A glycan (N-linked (GlcNAc...) asparagine) is linked at N842. Residues 857-879 traverse the membrane as a helical segment; it reads ILITIIAMSALGVLLGAVCGVVL. Over 880–923 the chain is Cytoplasmic; the sequence is YCACWHNGMSERNLSALENYNFELVDGVKLKKDKLNPQSNYSEA. S894 is modified (phosphoserine).

It belongs to the neuropilin family. Homodimer, and heterodimer with NRP2. Binds PLXNB1. Interacts with FER. Interacts with VEGFA. Interacts with ABCB8/MITOSUR in mitochondria. As to expression, nervous system.

The protein resides in the mitochondrion membrane. Its subcellular location is the cell membrane. The protein localises to the cytoplasm. Receptor involved in the development of the cardiovascular system, in angiogenesis, in the formation of certain neuronal circuits and in organogenesis outside the nervous system. Mediates the chemorepulsant activity of semaphorins. Recognizes a C-end rule (CendR) motif R/KXXR/K on its ligands which causes cellular internalization and vascular leakage. Binds to semaphorin 3A (SEMA3A), the PLGF-2 isoform of PGF, the VEGF165 isoform of VEGFA and VEGFB. Coexpression with KDR results in increased VEGF165 binding to KDR as well as increased chemotaxis. Regulates VEGF-induced angiogenesis. Binding to VEGFA initiates a signaling pathway needed for motor neuron axon guidance and cell body migration, including for the caudal migration of facial motor neurons from rhombomere 4 to rhombomere 6 during embryonic development. Regulates mitochondrial iron transport via interaction with ABCB8/MITOSUR. This chain is Neuropilin-1, found in Mus musculus (Mouse).